The sequence spans 307 residues: 1D-myo-inositol 2-acetamido-2-deoxy-alpha-D-glucopyranoside deacetylase 1 (307 aa).

Positions 21, 24, and 157 each coordinate Zn(2+).

The protein belongs to the MshB deacetylase family. The cofactor is Zn(2+).

The catalysed reaction is 1D-myo-inositol 2-acetamido-2-deoxy-alpha-D-glucopyranoside + H2O = 1D-myo-inositol 2-amino-2-deoxy-alpha-D-glucopyranoside + acetate. In terms of biological role, catalyzes the deacetylation of 1D-myo-inositol 2-acetamido-2-deoxy-alpha-D-glucopyranoside (GlcNAc-Ins) in the mycothiol biosynthesis pathway. The protein is 1D-myo-inositol 2-acetamido-2-deoxy-alpha-D-glucopyranoside deacetylase 1 of Frankia casuarinae (strain DSM 45818 / CECT 9043 / HFP020203 / CcI3).